A 43-amino-acid polypeptide reads, in one-letter code: Protein PsbN (43 aa).

The chain crosses the membrane as a helical span at residues 7–27 (LVVAIAAITICITAFAIYTAF).

Belongs to the PsbN family.

The protein resides in the cellular thylakoid membrane. In terms of biological role, may play a role in photosystem I and II biogenesis. This chain is Protein PsbN, found in Synechococcus sp. (strain JA-3-3Ab) (Cyanobacteria bacterium Yellowstone A-Prime).